We begin with the raw amino-acid sequence, 407 residues long: Deacetylase Atu3266 (407 aa).

Zn(2+) is bound by residues H75, H77, K173, H206, H229, and D289. K173 carries the N6-carboxylysine modification.

It belongs to the metallo-dependent hydrolases superfamily. Atu3266/EF_0837 deacetylase family. Homohexamer, dimer of trimers. The cofactor is Zn(2+).

Functionally, esterase that catalyzes the deacetylation of acetyl-(R)-mandelate (in vitro). Can also hydrolyze acetyl glycolate, but with lower efficiency. Has very low N-acetyl-D-amino acid deacetylase activity with N-acetyl-D-serine and N-acetyl-D-threonine (in vitro). Theoretical substrate docking studies suggest that other N-acetylated amino acids may optimally occupy the active site and may in fact be the physiological substrates. The sequence is that of Deacetylase Atu3266 from Agrobacterium fabrum (strain C58 / ATCC 33970) (Agrobacterium tumefaciens (strain C58)).